We begin with the raw amino-acid sequence, 252 residues long: tRNA uridine(34) hydroxylase (252 aa).

The Rhodanese domain occupies 129-223 (QGRPVVMLDT…YFEETGGKGF (95 aa)). Cys183 (cysteine persulfide intermediate) is an active-site residue.

Belongs to the TrhO family.

It catalyses the reaction uridine(34) in tRNA + AH2 + O2 = 5-hydroxyuridine(34) in tRNA + A + H2O. Its function is as follows. Catalyzes oxygen-dependent 5-hydroxyuridine (ho5U) modification at position 34 in tRNAs. This Bordetella petrii (strain ATCC BAA-461 / DSM 12804 / CCUG 43448) protein is tRNA uridine(34) hydroxylase.